A 195-amino-acid polypeptide reads, in one-letter code: Fe/S biogenesis protein NfuA (195 aa).

[4Fe-4S] cluster is bound by residues cysteine 152 and cysteine 155.

Belongs to the NfuA family. In terms of assembly, homodimer. [4Fe-4S] cluster is required as a cofactor.

Involved in iron-sulfur cluster biogenesis. Binds a 4Fe-4S cluster, can transfer this cluster to apoproteins, and thereby intervenes in the maturation of Fe/S proteins. Could also act as a scaffold/chaperone for damaged Fe/S proteins. This chain is Fe/S biogenesis protein NfuA, found in Vibrio cholerae serotype O1 (strain ATCC 39541 / Classical Ogawa 395 / O395).